The chain runs to 648 residues: Macrolide export ATP-binding/permease protein MacB (648 aa).

Residues 5–243 (LELKDIRRSY…TGGTEPVVNT (239 aa)) form the ABC transporter domain. Residue 41–48 (GASGSGKS) participates in ATP binding. 4 consecutive transmembrane segments (helical) span residues 273 to 293 (LLTM…VVVG), 523 to 543 (LFLT…VMNI), 576 to 596 (AVLV…LIAF), and 611 to 631 (PLAL…FGWL).

The protein belongs to the ABC transporter superfamily. Macrolide exporter (TC 3.A.1.122) family. In terms of assembly, homodimer. Part of the tripartite efflux system MacAB-TolC, which is composed of an inner membrane transporter, MacB, a periplasmic membrane fusion protein, MacA, and an outer membrane component, TolC. The complex forms a large protein conduit and can translocate molecules across both the inner and outer membranes. Interacts with MacA.

It localises to the cell inner membrane. Functionally, part of the tripartite efflux system MacAB-TolC. MacB is a non-canonical ABC transporter that contains transmembrane domains (TMD), which form a pore in the inner membrane, and an ATP-binding domain (NBD), which is responsible for energy generation. Confers resistance against macrolides. This chain is Macrolide export ATP-binding/permease protein MacB, found in Escherichia coli O6:K15:H31 (strain 536 / UPEC).